A 159-amino-acid chain; its full sequence is Keratin-associated protein 6-2 (159 aa).

The interval 11 to 147 (GYGCGYGSGY…SYYRSGCCGY (137 aa)) is 66 X 2 AA repeats of G-[YCGS].

This sequence belongs to the KRTAP type 6 family. As to quaternary structure, interacts with hair keratins. As to expression, expressed in skin during two hair growth cycles. Expression restricted to the cortical cells of hair follicles, appearing first in the cortical cells processing the flat nuclei located a few cells above the dermal papilla.

In the hair cortex, hair keratin intermediate filaments are embedded in an interfilamentous matrix, consisting of hair keratin-associated proteins (KRTAP), which are essential for the formation of a rigid and resistant hair shaft through their extensive disulfide bond cross-linking with abundant cysteine residues of hair keratins. The matrix proteins include the high-sulfur and high-glycine-tyrosine keratins. The polypeptide is Keratin-associated protein 6-2 (Mus musculus (Mouse)).